We begin with the raw amino-acid sequence, 346 residues long: Nicotinate-nucleotide--dimethylbenzimidazole phosphoribosyltransferase (346 aa).

The active-site Proton acceptor is the glutamate 312.

Belongs to the CobT family.

It catalyses the reaction 5,6-dimethylbenzimidazole + nicotinate beta-D-ribonucleotide = alpha-ribazole 5'-phosphate + nicotinate + H(+). It functions in the pathway nucleoside biosynthesis; alpha-ribazole biosynthesis; alpha-ribazole from 5,6-dimethylbenzimidazole: step 1/2. Functionally, catalyzes the synthesis of alpha-ribazole-5'-phosphate from nicotinate mononucleotide (NAMN) and 5,6-dimethylbenzimidazole (DMB). The chain is Nicotinate-nucleotide--dimethylbenzimidazole phosphoribosyltransferase from Cupriavidus necator (strain ATCC 17699 / DSM 428 / KCTC 22496 / NCIMB 10442 / H16 / Stanier 337) (Ralstonia eutropha).